We begin with the raw amino-acid sequence, 348 residues long: Fe-S cluster assembly protein DRE2 (348 aa).

Residues 1–162 (MSQYKTGLLL…KKASSSTSNL (162 aa)) are N-terminal SAM-like domain. A disordered region spans residues 137–170 (KTNNTKLQSGSKLPTFKKASSSTSNLPSFKKADH). Over residues 144–163 (QSGSKLPTFKKASSSTSNLP) the composition is skewed to polar residues. The linker stretch occupies residues 163–242 (PSFKKADHSR…EEELIDEDGS (80 aa)). S206 bears the Phosphoserine mark. [2Fe-2S] cluster-binding residues include C252, C263, C266, and C268. The segment at 252–268 (CGKSKTKKKKACKDCTC) is fe-S binding site A. C311, C314, C322, and C325 together coordinate [4Fe-4S] cluster. 2 consecutive short sequence motifs (cx2C motif) follow at residues 311 to 314 (CGSC) and 322 to 325 (CSGC). Residues 311–325 (CGSCSLGDAFRCSGC) are fe-S binding site B.

This sequence belongs to the anamorsin family. As to quaternary structure, monomer. Interacts with TAH18. Interacts with MIA40. The cofactor is [2Fe-2S] cluster. It depends on [4Fe-4S] cluster as a cofactor.

The protein resides in the cytoplasm. The protein localises to the mitochondrion intermembrane space. In terms of biological role, component of the cytosolic iron-sulfur (Fe-S) protein assembly (CIA) machinery required for the maturation of extramitochondrial Fe-S proteins. Part of an electron transfer chain functioning in an early step of cytosolic Fe-S biogenesis, facilitating the de novo assembly of a [4Fe-4S] cluster on the scaffold complex CFD1-NBP35. Electrons are transferred to DRE2 from NADPH via the FAD- and FMN-containing protein TAH18. TAH18-DRE2 are also required for the assembly of the diferric tyrosyl radical cofactor of ribonucleotide reductase (RNR), probably by providing electrons for reduction during radical cofactor maturation in the catalytic small subunit RNR2. This chain is Fe-S cluster assembly protein DRE2, found in Saccharomyces cerevisiae (strain Lalvin EC1118 / Prise de mousse) (Baker's yeast).